Consider the following 651-residue polypeptide: Histone-arginine methyltransferase CARM1 (651 aa).

The tract at residues Ala-28–Ser-139 is interaction with C9orf72. One can recognise an SAM-dependent MTase PRMT-type domain in the interval Ala-147–Val-454. The S-adenosyl-L-methionine site is built by Gln-160, Arg-169, Gly-193, and Glu-215. Ser-217 carries the post-translational modification Phosphoserine. A Glycyl lysine isopeptide (Lys-Gly) (interchain with G-Cter in ubiquitin) cross-link involves residue Lys-228. S-adenosyl-L-methionine contacts are provided by Glu-244 and Ser-272. Residues Arg-347–Leu-380 are required for nuclear translocation. The transactivation domain stretch occupies residues Thr-500–Ser-651. A Dimethylated arginine modification is found at Arg-551. Residues Arg-581–Ser-617 are disordered.

Belongs to the class I-like SAM-binding methyltransferase superfamily. Protein arginine N-methyltransferase family. In terms of assembly, homodimer. Interacts with NR1H4. Interacts with SNRPC. Interacts with the C-terminus of NCOA2/GRIP1, NCO3/ACTR and NCOA1/SRC1. Part of a complex consisting of CARM1, EP300/P300 and NCOA2/GRIP1. Interacts with FLII, TP53, myogenic factor MEF2, EP300/P300, TRIM24, CREBBP and CTNNB1. Interacts with RELA. Identified in a complex containing CARM1, TRIM24 and NCOA2/GRIP1. Interacts with NCOA3/SRC3. Interacts with SKP2. Interacts (via PH domain-like fold) with C9orf72. Interacts with PARP1; promoting PARP1 recruimtent to replication forks. Auto-methylated on Arg-551. Methylation enhances transcription coactivator activity. Methylation is required for its role in the regulation of pre-mRNA alternative splicing. In terms of processing, phosphorylation at Ser-217 interferes with S-adenosyl-L-methionine binding and strongly reduces methyltransferase activity. Phosphorylation at Ser-217 is strongly increased during mitosis, and decreases rapidly to a very low, basal level after entry into the G1 phase of the cell cycle. Phosphorylation at Ser-217 may promote location in the cytosol. Post-translationally, ubiquitinated by E3 ubiquitin-protein ligase complex containing FBXO9 at Lys-228; leading to proteasomal degradation. In terms of tissue distribution, isoform 1 is expressed at low levels in brain, liver and testis. Isoform 2 is highly expressed in brain, liver, skeletal muscle and testis. As to expression, isoform 3 is highly expressed in spleen, liver and kidney. In terms of tissue distribution, isoform 4 is expressed in spleen, liver and kidney.

The protein resides in the nucleus. It is found in the cytoplasm. Its subcellular location is the chromosome. It catalyses the reaction L-arginyl-[protein] + 2 S-adenosyl-L-methionine = N(omega),N(omega)-dimethyl-L-arginyl-[protein] + 2 S-adenosyl-L-homocysteine + 2 H(+). With respect to regulation, methylation of H3R17 (H3R17me) by CARM1 is stimulated by preacetylation of H3 'Lys-18' (H3K18ac) H3 'Lys-23' (H3K23ac) by EP300 and blocked by citrullination of H3 'Arg-17' (H3R17ci) by PADI4. Functionally, methylates (mono- and asymmetric dimethylation) the guanidino nitrogens of arginyl residues in several proteins involved in DNA packaging, transcription regulation, pre-mRNA splicing, and mRNA stability. Recruited to promoters upon gene activation together with histone acetyltransferases from EP300/P300 and p160 families, methylates histone H3 at 'Arg-17' (H3R17me), forming mainly asymmetric dimethylarginine (H3R17me2a), leading to activation of transcription via chromatin remodeling. During nuclear hormone receptor activation and TCF7L2/TCF4 activation, acts synergically with EP300/P300 and either one of the p160 histone acetyltransferases NCOA1/SRC1, NCOA2/GRIP1 and NCOA3/ACTR or CTNNB1/beta-catenin to activate transcription. During myogenic transcriptional activation, acts together with NCOA3/ACTR as a coactivator for MEF2C. During monocyte inflammatory stimulation, acts together with EP300/P300 as a coactivator for NF-kappa-B. Acts as a coactivator for PPARG, promotes adipocyte differentiation and the accumulation of brown fat tissue. Plays a role in the regulation of pre-mRNA alternative splicing by methylation of splicing factors. Also seems to be involved in p53/TP53 transcriptional activation. Methylates EP300/P300, both at 'Arg-2142', which may loosen its interaction with NCOA2/GRIP1, and at 'Arg-580' and 'Arg-604' in the KIX domain, which impairs its interaction with CREB and inhibits CREB-dependent transcriptional activation. Also methylates arginine residues in RNA-binding proteins PABPC1, ELAVL1 and ELAV4, which may affect their mRNA-stabilizing properties and the half-life of their target mRNAs. Acts as a transcriptional coactivator of ACACA/acetyl-CoA carboxylase by enriching H3R17 methylation at its promoter, thereby positively regulating fatty acid synthesis. Independently of its methyltransferase activity, involved in replication fork progression: promotes PARP1 recruitment to replication forks, leading to poly-ADP-ribosylation of chromatin at replication forks and reduced fork speed. Isoform 3 specifically affects pre-mRNA splicing. This activity is independent from methyltransferase activity. The sequence is that of Histone-arginine methyltransferase CARM1 (Carm1) from Rattus norvegicus (Rat).